A 365-amino-acid chain; its full sequence is Phosphoserine aminotransferase (365 aa).

Arg42 contributes to the L-glutamate binding site. Pyridoxal 5'-phosphate contacts are provided by residues 76–77 (GR), Trp102, Thr156, Asp175, and Gln198. Lys199 carries the post-translational modification N6-(pyridoxal phosphate)lysine. A pyridoxal 5'-phosphate-binding site is contributed by 240-241 (NT).

Belongs to the class-V pyridoxal-phosphate-dependent aminotransferase family. SerC subfamily. Homodimer. The cofactor is pyridoxal 5'-phosphate.

The protein resides in the cytoplasm. It catalyses the reaction O-phospho-L-serine + 2-oxoglutarate = 3-phosphooxypyruvate + L-glutamate. The enzyme catalyses 4-(phosphooxy)-L-threonine + 2-oxoglutarate = (R)-3-hydroxy-2-oxo-4-phosphooxybutanoate + L-glutamate. Its pathway is amino-acid biosynthesis; L-serine biosynthesis; L-serine from 3-phospho-D-glycerate: step 2/3. The protein operates within cofactor biosynthesis; pyridoxine 5'-phosphate biosynthesis; pyridoxine 5'-phosphate from D-erythrose 4-phosphate: step 3/5. Functionally, catalyzes the reversible conversion of 3-phosphohydroxypyruvate to phosphoserine and of 3-hydroxy-2-oxo-4-phosphonooxybutanoate to phosphohydroxythreonine. This is Phosphoserine aminotransferase from Shewanella oneidensis (strain ATCC 700550 / JCM 31522 / CIP 106686 / LMG 19005 / NCIMB 14063 / MR-1).